A 501-amino-acid polypeptide reads, in one-letter code: MLO-like protein 5 (501 aa).

Residues 1 to 22 (MAGGGGGSTSGEGPRELDQTPT) are Extracellular-facing. Residues 23–43 (WAVSTVCGVIILISIVLELMI) form a helical membrane-spanning segment. Topologically, residues 44–68 (HKIGEVFTERRKKALYEALQKIKNE) are cytoplasmic. Residues 69–89 (LMVLGFISLLLTFGQNYIASL) traverse the membrane as a helical segment. Residues 90 to 151 (CVASRYGHAM…ISLNALHQVH (62 aa)) lie on the Extracellular side of the membrane. The helical transmembrane segment at 152–172 (IFIFFLAVFHVIYSAITMMLG) threads the bilayer. Residues 173-273 (RAKIRGWKVW…IKRSLEDDFK (101 aa)) are Cytoplasmic-facing. The chain crosses the membrane as a helical span at residues 274–294 (VVVGISPELWAFVMLFLLFDV). Position 295 (His295) is a topological domain, extracellular. Residues 296–316 (GWYVTAVITMIPPLLTLAIGT) form a helical membrane-spanning segment. Over 317 to 359 (KLQAIISDMALEIQERHAVIQGMPLVNVSDRHFWFSRPALVLH) the chain is Cytoplasmic. A helical membrane pass occupies residues 360–380 (IIHFILFQNAFEITYFFWIWY). At 381–391 (EFGLRSCFHHH) the chain is on the extracellular side. A helical membrane pass occupies residues 392 to 412 (FALIIIRVALGVGVQFLCSYI). Residues 413 to 501 (TLPLYALVTQ…SQSRDLLSGP (89 aa)) lie on the Cytoplasmic side of the membrane. A disordered region spans residues 443 to 501 (WHKNAKKKSETPGQTQPPLPNLRPKTGGDIESASPANITASVDVKESDQSQSRDLLSGP). Residues 450-471 (KSETPGQTQPPLPNLRPKTGGD) are calmodulin-binding. Over residues 491–501 (QSQSRDLLSGP) the composition is skewed to polar residues.

Belongs to the MLO family.

The protein localises to the membrane. Functionally, may be involved in modulation of pathogen defense and leaf cell death. Activity seems to be regulated by Ca(2+)-dependent calmodulin binding and seems not to require heterotrimeric G proteins. This is MLO-like protein 5 (MLO5) from Arabidopsis thaliana (Mouse-ear cress).